We begin with the raw amino-acid sequence, 428 residues long: Type II methyltransferase M.TthHB8I (428 aa).

The interval 407–428 (RKGNTERRKHGPYTSPESAGSF) is disordered.

Belongs to the N(4)/N(6)-methyltransferase family.

The catalysed reaction is a 2'-deoxyadenosine in DNA + S-adenosyl-L-methionine = an N(6)-methyl-2'-deoxyadenosine in DNA + S-adenosyl-L-homocysteine + H(+). Functionally, a gamma subtype methylase, recognizes the double-stranded sequence 5'-TCGA-3', methylates A-4 on both strands and protects the DNA from cleavage by the TthHB8I endonuclease. The sequence is that of Type II methyltransferase M.TthHB8I from Thermus thermophilus (strain ATCC 27634 / DSM 579 / HB8).